Reading from the N-terminus, the 286-residue chain is 4-hydroxybenzoate octaprenyltransferase (286 aa).

Helical transmembrane passes span 22 to 42 (IGTL…SAGV), 45 to 65 (FSLL…GCVI), 90 to 110 (LTAV…FVLV), 113 to 133 (LNQF…IYPF), 142 to 162 (QVVL…AVVG), 169 to 189 (WLLF…YAMV), 212 to 232 (LYIA…GWLE), 236 to 256 (VSYY…QWLI), and 265 to 285 (FRAF…IMLA).

This sequence belongs to the UbiA prenyltransferase family. Requires Mg(2+) as cofactor.

Its subcellular location is the cell inner membrane. The enzyme catalyses all-trans-octaprenyl diphosphate + 4-hydroxybenzoate = 4-hydroxy-3-(all-trans-octaprenyl)benzoate + diphosphate. Its pathway is cofactor biosynthesis; ubiquinone biosynthesis. In terms of biological role, catalyzes the prenylation of para-hydroxybenzoate (PHB) with an all-trans polyprenyl group. Mediates the second step in the final reaction sequence of ubiquinone-8 (UQ-8) biosynthesis, which is the condensation of the polyisoprenoid side chain with PHB, generating the first membrane-bound Q intermediate 3-octaprenyl-4-hydroxybenzoate. This Tolumonas auensis (strain DSM 9187 / NBRC 110442 / TA 4) protein is 4-hydroxybenzoate octaprenyltransferase.